A 140-amino-acid chain; its full sequence is Large ribosomal subunit protein uL16 (140 aa).

The interval 1 to 24 is disordered; sequence MALAPARTKYRKSQKGSRAGNAKR.

This sequence belongs to the universal ribosomal protein uL16 family. Part of the 50S ribosomal subunit.

Binds 23S rRNA and is also seen to make contacts with the A and possibly P site tRNAs. In Opitutus terrae (strain DSM 11246 / JCM 15787 / PB90-1), this protein is Large ribosomal subunit protein uL16.